A 248-amino-acid polypeptide reads, in one-letter code: UPF0273 protein APE_1505.1 (248 aa).

In terms of domain architecture, KaiC spans 3-247; sequence DRVKTGIPGM…VVRIGRRVSI (245 aa). An ATP-binding site is contributed by 30 to 37; sequence GGPGTGKS.

Belongs to the UPF0273 family.

This is UPF0273 protein APE_1505.1 from Aeropyrum pernix (strain ATCC 700893 / DSM 11879 / JCM 9820 / NBRC 100138 / K1).